A 189-amino-acid polypeptide reads, in one-letter code: Small ribosomal subunit protein uS5 (189 aa).

Positions 22–85 (FVDKLVAINR…EAAKRELIFV (64 aa)) constitute an S5 DRBM domain.

This sequence belongs to the universal ribosomal protein uS5 family. Part of the 30S ribosomal subunit. Contacts proteins S4 and S8.

Its function is as follows. With S4 and S12 plays an important role in translational accuracy. Located at the back of the 30S subunit body where it stabilizes the conformation of the head with respect to the body. The sequence is that of Small ribosomal subunit protein uS5 from Rhizobium etli (strain CIAT 652).